Consider the following 501-residue polypeptide: Melianol synthase CYP71BQ5 (501 aa).

Residues 1–21 (MEFRLPVLLSFLLFFLMLVRH) traverse the membrane as a helical segment. Cys439 contributes to the heme binding site.

This sequence belongs to the cytochrome P450 family. Heme serves as cofactor. Mainly expressed in petioles and roots, and, to a lower extent, in leaves.

The protein resides in the membrane. The enzyme catalyses dihydroniloticin + 2 reduced [NADPH--hemoprotein reductase] + 2 O2 = melianol + 2 oxidized [NADPH--hemoprotein reductase] + 3 H2O + 2 H(+). Its pathway is secondary metabolite biosynthesis; terpenoid biosynthesis. Monooxygenase involved in the biosynthesis of limonoids triterpene natural products such as azadirachtin, an antifeedant widely used as bioinsecticide, and possessing many medicinal applications including anti-tumoral, anti-malarial, anti-rheumatic, antibacterial, anti-inflammatory, anti-pyretic and diuretic effects. Catalyzes the conversion of dihydroniloticin to the protolimonoid melianol. The chain is Melianol synthase CYP71BQ5 from Melia azedarach (Chinaberry tree).